The following is a 327-amino-acid chain: Zinc transport protein ZntB (327 aa).

The Cytoplasmic portion of the chain corresponds to 1 to 271 (MDVVEGKALQ…AMNRRTYTMS (271 aa)). Residues 272-292 (LLAMVFLPTTFLTGLFGVNLG) traverse the membrane as a helical segment. Residues 293 to 300 (GIPGNTDA) lie on the Periplasmic side of the membrane. A helical transmembrane segment spans residues 301–321 (FGFTIFCMMLVVLVLSVAWWL). Residues 322 to 327 (KRSKWL) lie on the Cytoplasmic side of the membrane.

The protein belongs to the CorA metal ion transporter (MIT) (TC 1.A.35) family.

Its subcellular location is the cell inner membrane. The enzyme catalyses Zn(2+)(out) + H(+)(out) = Zn(2+)(in) + H(+)(in). Zinc transporter. Acts as a Zn(2+):proton symporter, which likely mediates zinc ion uptake. The sequence is that of Zinc transport protein ZntB from Yersinia pseudotuberculosis serotype O:1b (strain IP 31758).